The sequence spans 688 residues: Methionine--tRNA ligase (688 aa).

The 'HIGH' region signature appears at 13–23 (PYANGNFHIGH). 4 residues coordinate Zn(2+): C144, C147, C157, and C160. A 'KMSKS' region motif is present at residues 342 to 346 (KMSKS). Residue K345 coordinates ATP. One can recognise a tRNA-binding domain in the interval 582–688 (DFAKVDLRIA…PGAQPGMRIH (107 aa)).

This sequence belongs to the class-I aminoacyl-tRNA synthetase family. MetG type 1 subfamily. As to quaternary structure, homodimer. It depends on Zn(2+) as a cofactor.

The protein resides in the cytoplasm. It carries out the reaction tRNA(Met) + L-methionine + ATP = L-methionyl-tRNA(Met) + AMP + diphosphate. Its function is as follows. Is required not only for elongation of protein synthesis but also for the initiation of all mRNA translation through initiator tRNA(fMet) aminoacylation. In Acidovorax sp. (strain JS42), this protein is Methionine--tRNA ligase.